Reading from the N-terminus, the 120-residue chain is DNA-directed RNA polymerase II subunit rpb11 (120 aa).

This sequence belongs to the archaeal Rpo11/eukaryotic RPB11/RPC19 RNA polymerase subunit family. In terms of assembly, component of the RNA polymerase II (Pol II) complex consisting of 12 subunits.

It is found in the nucleus. In terms of biological role, DNA-dependent RNA polymerase catalyzes the transcription of DNA into RNA using the four ribonucleoside triphosphates as substrates. Component of RNA polymerase II which synthesizes mRNA precursors and many functional non-coding RNAs. Pol II is the central component of the basal RNA polymerase II transcription machinery. It is composed of mobile elements that move relative to each other. RPB11 is part of the core element with the central large cleft. The protein is DNA-directed RNA polymerase II subunit rpb11 (polr2j) of Dictyostelium discoideum (Social amoeba).